The chain runs to 207 residues: Phosphoribosylglycinamide formyltransferase (207 aa).

13-15 (GSN) is a binding site for N(1)-(5-phospho-beta-D-ribosyl)glycinamide. (6R)-10-formyltetrahydrofolate is bound by residues 100–103 (MHIL) and N120. Residue H122 is the Proton donor of the active site. Position 162 (D162) interacts with (6R)-10-formyltetrahydrofolate. Position 191 (E191) interacts with N(1)-(5-phospho-beta-D-ribosyl)glycinamide.

The protein belongs to the GART family.

The catalysed reaction is N(1)-(5-phospho-beta-D-ribosyl)glycinamide + (6R)-10-formyltetrahydrofolate = N(2)-formyl-N(1)-(5-phospho-beta-D-ribosyl)glycinamide + (6S)-5,6,7,8-tetrahydrofolate + H(+). It functions in the pathway purine metabolism; IMP biosynthesis via de novo pathway; N(2)-formyl-N(1)-(5-phospho-D-ribosyl)glycinamide from N(1)-(5-phospho-D-ribosyl)glycinamide (10-formyl THF route): step 1/1. This Schizosaccharomyces pombe (strain 972 / ATCC 24843) (Fission yeast) protein is Phosphoribosylglycinamide formyltransferase (ade5).